A 299-amino-acid polypeptide reads, in one-letter code: MAERDFIIVSGLSGSGKSTVLQALEDQGYYCVDNLPATLLVDFGAQLARRDASSMLAAVSIDVRNREFLAALPQALADLRQRYALCPRILFLEADEGTLLRRFSETRRRHPLTDDLAAALGESLLTVLRREREMVQPLADVADKRLDTSQINTHQLRLRVQAWSLASRHYSGLVLLLQSFAFKKGLPLDSDFVFDLRALPNPHYDPELRALTGRDAPVRDFLEKSPEVARSFVSLRTFLQTWLAPFAQEHRNYVTVSLGCTGGQHRSVYMVEALARLLAGEGQRVLIQHRELGITETLT.

11 to 18 contributes to the ATP binding site; that stretch reads GLSGSGKS. 62–65 is a GTP binding site; sequence DVRN.

The protein belongs to the RapZ-like family.

In terms of biological role, displays ATPase and GTPase activities. The sequence is that of Nucleotide-binding protein AFE_3021 from Acidithiobacillus ferrooxidans (strain ATCC 23270 / DSM 14882 / CIP 104768 / NCIMB 8455) (Ferrobacillus ferrooxidans (strain ATCC 23270)).